We begin with the raw amino-acid sequence, 308 residues long: MKHLTGLCELPLYEIQRLLDLAAVFKKELRTKAPAFAPTLLSKKIALAFFENSTRTRFSFEIAAKHLGASTLNFTASSSSVSKGETLGDTIKNLEAMQVDAFVIRHPSSGAADLITGITSKSVINAGDGSHEHPTQALLDMFTLKEHFGSLEGLNVFILGDILHSRVARSNIFGMLTLGANVALCSPSTLLPPGTSDLGIRIFTDLDQAIQWADAAIVLRLQLERATGGYLPSLGEYAVHFGLTDERLERIRKHLLVLHPGPINREIEISSRVADRMQPPGFSSSLLLQQVTNGIAVRMAVLQTLLAE.

Arg55 and Thr56 together coordinate carbamoyl phosphate. Lys83 is a binding site for L-aspartate. Carbamoyl phosphate-binding residues include Arg105, His133, and Gln136. L-aspartate is bound by residues Arg166 and Arg220. Gly261 and Pro262 together coordinate carbamoyl phosphate.

It belongs to the aspartate/ornithine carbamoyltransferase superfamily. ATCase family. In terms of assembly, heterododecamer (2C3:3R2) of six catalytic PyrB chains organized as two trimers (C3), and six regulatory PyrI chains organized as three dimers (R2).

The enzyme catalyses carbamoyl phosphate + L-aspartate = N-carbamoyl-L-aspartate + phosphate + H(+). Its pathway is pyrimidine metabolism; UMP biosynthesis via de novo pathway; (S)-dihydroorotate from bicarbonate: step 2/3. Catalyzes the condensation of carbamoyl phosphate and aspartate to form carbamoyl aspartate and inorganic phosphate, the committed step in the de novo pyrimidine nucleotide biosynthesis pathway. The protein is Aspartate carbamoyltransferase catalytic subunit of Chlorobium phaeobacteroides (strain DSM 266 / SMG 266 / 2430).